The chain runs to 143 residues: Adrenodoxin, mitochondrial (143 aa).

Residues 1 to 19 constitute a mitochondrion transit peptide; sequence CSAVAVRTLRPLSLSARAA. The region spanning 26-130 is the 2Fe-2S ferredoxin-type domain; the sequence is ITVHFINRDG…NMTVRVPEAV (105 aa). [2Fe-2S] cluster-binding residues include Cys65, Cys71, Cys74, and Cys111.

It belongs to the adrenodoxin/putidaredoxin family. It depends on [2Fe-2S] cluster as a cofactor.

It is found in the mitochondrion matrix. Its function is as follows. Essential for the synthesis of various steroid hormones. Participates in the reduction of mitochondrial cytochrome P450 for steroidogenesis. Transfers electrons from adrenodoxin reductase to CYP11A1, a cytochrome P450 that catalyzes cholesterol side-chain cleavage. Does not form a ternary complex with adrenodoxin reductase and CYP11A1 but shuttles between the two enzymes to transfer electrons. This chain is Adrenodoxin, mitochondrial (FDX1), found in Gallus gallus (Chicken).